Reading from the N-terminus, the 120-residue chain is Large ribosomal subunit protein uL18 (120 aa).

This sequence belongs to the universal ribosomal protein uL18 family. As to quaternary structure, part of the 50S ribosomal subunit; part of the 5S rRNA/L5/L18/L25 subcomplex. Contacts the 5S and 23S rRNAs.

Functionally, this is one of the proteins that bind and probably mediate the attachment of the 5S RNA into the large ribosomal subunit, where it forms part of the central protuberance. The sequence is that of Large ribosomal subunit protein uL18 from Bacillus cereus (strain AH820).